The sequence spans 478 residues: Bifunctional protein HldE (478 aa).

Residues 1-318 (MKVTLPDFRQ…ENAIRGRADT (318 aa)) form a ribokinase region. An ATP-binding site is contributed by 195-198 (NLSE). The active site involves aspartate 264. A cytidylyltransferase region spans residues 344–478 (MTNGCFDILH…NMIKASTSQS (135 aa)).

In the N-terminal section; belongs to the carbohydrate kinase PfkB family. It in the C-terminal section; belongs to the cytidylyltransferase family. In terms of assembly, homodimer.

It catalyses the reaction D-glycero-beta-D-manno-heptose 7-phosphate + ATP = D-glycero-beta-D-manno-heptose 1,7-bisphosphate + ADP + H(+). The catalysed reaction is D-glycero-beta-D-manno-heptose 1-phosphate + ATP + H(+) = ADP-D-glycero-beta-D-manno-heptose + diphosphate. It functions in the pathway nucleotide-sugar biosynthesis; ADP-L-glycero-beta-D-manno-heptose biosynthesis; ADP-L-glycero-beta-D-manno-heptose from D-glycero-beta-D-manno-heptose 7-phosphate: step 1/4. Its pathway is nucleotide-sugar biosynthesis; ADP-L-glycero-beta-D-manno-heptose biosynthesis; ADP-L-glycero-beta-D-manno-heptose from D-glycero-beta-D-manno-heptose 7-phosphate: step 3/4. Catalyzes the phosphorylation of D-glycero-D-manno-heptose 7-phosphate at the C-1 position to selectively form D-glycero-beta-D-manno-heptose-1,7-bisphosphate. Its function is as follows. Catalyzes the ADP transfer from ATP to D-glycero-beta-D-manno-heptose 1-phosphate, yielding ADP-D-glycero-beta-D-manno-heptose. The protein is Bifunctional protein HldE of Pectobacterium atrosepticum (strain SCRI 1043 / ATCC BAA-672) (Erwinia carotovora subsp. atroseptica).